Consider the following 294-residue polypeptide: Acetyl-coenzyme A carboxylase carboxyl transferase subunit beta (294 aa).

The CoA carboxyltransferase N-terminal domain occupies 25 to 294; sequence VWTKCTACEQ…PFLEPEIIAD (270 aa). Zn(2+) is bound by residues Cys-29, Cys-32, Cys-48, and Cys-51. The C4-type zinc-finger motif lies at 29–51; that stretch reads CTACEQVLYRDELKRHLEVCPKC.

It belongs to the AccD/PCCB family. In terms of assembly, acetyl-CoA carboxylase is a heterohexamer composed of biotin carboxyl carrier protein (AccB), biotin carboxylase (AccC) and two subunits each of ACCase subunit alpha (AccA) and ACCase subunit beta (AccD). The cofactor is Zn(2+).

It localises to the cytoplasm. It catalyses the reaction N(6)-carboxybiotinyl-L-lysyl-[protein] + acetyl-CoA = N(6)-biotinyl-L-lysyl-[protein] + malonyl-CoA. It participates in lipid metabolism; malonyl-CoA biosynthesis; malonyl-CoA from acetyl-CoA: step 1/1. Its function is as follows. Component of the acetyl coenzyme A carboxylase (ACC) complex. Biotin carboxylase (BC) catalyzes the carboxylation of biotin on its carrier protein (BCCP) and then the CO(2) group is transferred by the transcarboxylase to acetyl-CoA to form malonyl-CoA. The chain is Acetyl-coenzyme A carboxylase carboxyl transferase subunit beta from Actinobacillus succinogenes (strain ATCC 55618 / DSM 22257 / CCUG 43843 / 130Z).